The following is a 223-amino-acid chain: Small ribosomal subunit protein uS3 (223 aa).

One can recognise a KH type-2 domain in the interval 39 to 108; sequence IRKFVKKKGA…VILINIVEVK (70 aa).

The protein belongs to the universal ribosomal protein uS3 family. Part of the 30S ribosomal subunit. Forms a tight complex with proteins S10 and S14.

Binds the lower part of the 30S subunit head. Binds mRNA in the 70S ribosome, positioning it for translation. The polypeptide is Small ribosomal subunit protein uS3 (Clostridium kluyveri (strain NBRC 12016)).